We begin with the raw amino-acid sequence, 260 residues long: Ribosomal RNA small subunit methyltransferase G (260 aa).

A disordered region spans residues 1–45 (MKQRGPAGGRSSSPKPSAPGSGAGEGPDGRSAPASQKINKASAND). Residues 9-20 (GRSSSPKPSAPG) show a composition bias toward low complexity. The segment covering 33-45 (PASQKINKASAND) has biased composition (polar residues). Residues G123, F128, and R193 each coordinate S-adenosyl-L-methionine.

This sequence belongs to the methyltransferase superfamily. RNA methyltransferase RsmG family.

Its subcellular location is the cytoplasm. The catalysed reaction is guanosine(527) in 16S rRNA + S-adenosyl-L-methionine = N(7)-methylguanosine(527) in 16S rRNA + S-adenosyl-L-homocysteine. Functionally, specifically methylates the N7 position of guanine in position 527 of 16S rRNA. This Bradyrhizobium diazoefficiens (strain JCM 10833 / BCRC 13528 / IAM 13628 / NBRC 14792 / USDA 110) protein is Ribosomal RNA small subunit methyltransferase G.